A 378-amino-acid chain; its full sequence is Chaperone protein DnaJ (378 aa).

The 68-residue stretch at 5 to 72 (DFYEVLGVPK…QKRAAYDQFG (68 aa)) folds into the J domain. The CR-type zinc finger occupies 138-216 (GKEAQIRIPS…CHGQGKVKKQ (79 aa)). Zn(2+) contacts are provided by Cys-151, Cys-154, Cys-168, Cys-171, Cys-190, Cys-193, Cys-204, and Cys-207. 4 CXXCXGXG motif repeats span residues 151 to 158 (CETCHGSG), 168 to 175 (CTTCSGTG), 190 to 197 (CPHCRGTG), and 204 to 211 (CVTCHGQG). The tract at residues 354-378 (SLKKGGGKHSPSGESWTDRLKNLFT) is disordered. Positions 369 to 378 (WTDRLKNLFT) are enriched in basic and acidic residues.

It belongs to the DnaJ family. In terms of assembly, homodimer. It depends on Zn(2+) as a cofactor.

It localises to the cytoplasm. Functionally, participates actively in the response to hyperosmotic and heat shock by preventing the aggregation of stress-denatured proteins and by disaggregating proteins, also in an autonomous, DnaK-independent fashion. Unfolded proteins bind initially to DnaJ; upon interaction with the DnaJ-bound protein, DnaK hydrolyzes its bound ATP, resulting in the formation of a stable complex. GrpE releases ADP from DnaK; ATP binding to DnaK triggers the release of the substrate protein, thus completing the reaction cycle. Several rounds of ATP-dependent interactions between DnaJ, DnaK and GrpE are required for fully efficient folding. Also involved, together with DnaK and GrpE, in the DNA replication of plasmids through activation of initiation proteins. This is Chaperone protein DnaJ from Paracidovorax citrulli (strain AAC00-1) (Acidovorax citrulli).